The primary structure comprises 176 residues: Protein GrpE (176 aa).

The interval Met-1–Glu-31 is disordered.

Belongs to the GrpE family. Homodimer.

Its subcellular location is the cytoplasm. Participates actively in the response to hyperosmotic and heat shock by preventing the aggregation of stress-denatured proteins, in association with DnaK and GrpE. It is the nucleotide exchange factor for DnaK and may function as a thermosensor. Unfolded proteins bind initially to DnaJ; upon interaction with the DnaJ-bound protein, DnaK hydrolyzes its bound ATP, resulting in the formation of a stable complex. GrpE releases ADP from DnaK; ATP binding to DnaK triggers the release of the substrate protein, thus completing the reaction cycle. Several rounds of ATP-dependent interactions between DnaJ, DnaK and GrpE are required for fully efficient folding. The chain is Protein GrpE from Campylobacter jejuni subsp. doylei (strain ATCC BAA-1458 / RM4099 / 269.97).